The sequence spans 1393 residues: DNA-directed RNA polymerase subunit beta' (1393 aa).

Residues Cys-71, Cys-73, Cys-86, and Cys-89 each coordinate Zn(2+). Residues Asp-462, Asp-464, and Asp-466 each contribute to the Mg(2+) site. Positions 811, 885, 892, and 895 each coordinate Zn(2+).

It belongs to the RNA polymerase beta' chain family. The RNAP catalytic core consists of 2 alpha, 1 beta, 1 beta' and 1 omega subunit. When a sigma factor is associated with the core the holoenzyme is formed, which can initiate transcription. It depends on Mg(2+) as a cofactor. Zn(2+) is required as a cofactor.

The catalysed reaction is RNA(n) + a ribonucleoside 5'-triphosphate = RNA(n+1) + diphosphate. Its function is as follows. DNA-dependent RNA polymerase catalyzes the transcription of DNA into RNA using the four ribonucleoside triphosphates as substrates. This Azorhizobium caulinodans (strain ATCC 43989 / DSM 5975 / JCM 20966 / LMG 6465 / NBRC 14845 / NCIMB 13405 / ORS 571) protein is DNA-directed RNA polymerase subunit beta'.